Consider the following 115-residue polypeptide: Large ribosomal subunit protein bL20 (115 aa).

The protein belongs to the bacterial ribosomal protein bL20 family.

In terms of biological role, binds directly to 23S ribosomal RNA and is necessary for the in vitro assembly process of the 50S ribosomal subunit. It is not involved in the protein synthesizing functions of that subunit. This Chlorobium phaeobacteroides (strain DSM 266 / SMG 266 / 2430) protein is Large ribosomal subunit protein bL20.